The chain runs to 171 residues: Peptide deformylase (171 aa).

The Fe cation site is built by Cys92 and His134. Glu135 is a catalytic residue. His138 contacts Fe cation.

This sequence belongs to the polypeptide deformylase family. The cofactor is Fe(2+).

It carries out the reaction N-terminal N-formyl-L-methionyl-[peptide] + H2O = N-terminal L-methionyl-[peptide] + formate. Removes the formyl group from the N-terminal Met of newly synthesized proteins. Requires at least a dipeptide for an efficient rate of reaction. N-terminal L-methionine is a prerequisite for activity but the enzyme has broad specificity at other positions. The polypeptide is Peptide deformylase (Polynucleobacter necessarius subsp. necessarius (strain STIR1)).